A 333-amino-acid chain; its full sequence is O-acetyl transferase (333 aa).

Belongs to the acyltransferase 3 family.

The protein localises to the host cell inner membrane. Its function is as follows. Antigenically converts S.flexneri serotype X to 3a, Y to 3b, 1a to 1b and 4a to 4b by O-acetylating the O-antigenic polysaccharide chain. The chain is O-acetyl transferase (OAC) from Shigella flexneri (Shigella flexneri bacteriophage VI).